The primary structure comprises 385 residues: 4-hydroxy-3-methylbut-2-en-1-yl diphosphate synthase (flavodoxin) 2 (385 aa).

[4Fe-4S] cluster contacts are provided by Cys-281, Cys-284, Cys-316, and Glu-323.

This sequence belongs to the IspG family. Requires [4Fe-4S] cluster as cofactor.

It catalyses the reaction (2E)-4-hydroxy-3-methylbut-2-enyl diphosphate + oxidized [flavodoxin] + H2O + 2 H(+) = 2-C-methyl-D-erythritol 2,4-cyclic diphosphate + reduced [flavodoxin]. It functions in the pathway isoprenoid biosynthesis; isopentenyl diphosphate biosynthesis via DXP pathway; isopentenyl diphosphate from 1-deoxy-D-xylulose 5-phosphate: step 5/6. Functionally, converts 2C-methyl-D-erythritol 2,4-cyclodiphosphate (ME-2,4cPP) into 1-hydroxy-2-methyl-2-(E)-butenyl 4-diphosphate. This chain is 4-hydroxy-3-methylbut-2-en-1-yl diphosphate synthase (flavodoxin) 2, found in Streptomyces avermitilis (strain ATCC 31267 / DSM 46492 / JCM 5070 / NBRC 14893 / NCIMB 12804 / NRRL 8165 / MA-4680).